The primary structure comprises 221 residues: uncharacterized protein (221 aa).

One can recognise a Peptidase S8 domain in the interval 1–189 (MDSGKDTNGY…NVVYCSEKAV (189 aa)).

It belongs to the peptidase S8 family.

This is an uncharacterized protein from Aquifex aeolicus (strain VF5).